We begin with the raw amino-acid sequence, 545 residues long: Ribulokinase (545 aa).

Belongs to the ribulokinase family.

The catalysed reaction is D-ribulose + ATP = D-ribulose 5-phosphate + ADP + H(+). It carries out the reaction L-ribulose + ATP = L-ribulose 5-phosphate + ADP + H(+). It functions in the pathway carbohydrate degradation; L-arabinose degradation via L-ribulose; D-xylulose 5-phosphate from L-arabinose (bacterial route): step 2/3. In Staphylococcus aureus (strain Mu3 / ATCC 700698), this protein is Ribulokinase.